A 154-amino-acid chain; its full sequence is Large-conductance mechanosensitive channel (154 aa).

The next 2 helical transmembrane spans lie at 14–34 (VVDL…VNSL) and 86–106 (VFIN…FFVV).

Belongs to the MscL family. Homopentamer.

The protein localises to the cell membrane. Functionally, channel that opens in response to stretch forces in the membrane lipid bilayer. May participate in the regulation of osmotic pressure changes within the cell. The sequence is that of Large-conductance mechanosensitive channel from Dehalococcoides mccartyi (strain ATCC BAA-2100 / JCM 16839 / KCTC 5957 / BAV1).